We begin with the raw amino-acid sequence, 369 residues long: Cobalt-precorrin-5B C(1)-methyltransferase (369 aa).

It belongs to the CbiD family.

It catalyses the reaction Co-precorrin-5B + S-adenosyl-L-methionine = Co-precorrin-6A + S-adenosyl-L-homocysteine. Its pathway is cofactor biosynthesis; adenosylcobalamin biosynthesis; cob(II)yrinate a,c-diamide from sirohydrochlorin (anaerobic route): step 6/10. Catalyzes the methylation of C-1 in cobalt-precorrin-5B to form cobalt-precorrin-6A. This is Cobalt-precorrin-5B C(1)-methyltransferase from Brucella melitensis biotype 2 (strain ATCC 23457).